A 122-amino-acid chain; its full sequence is Large ribosomal subunit protein uL14 (122 aa).

The protein belongs to the universal ribosomal protein uL14 family. In terms of assembly, part of the 50S ribosomal subunit. Forms a cluster with proteins L3 and L19. In the 70S ribosome, L14 and L19 interact and together make contacts with the 16S rRNA in bridges B5 and B8.

Its function is as follows. Binds to 23S rRNA. Forms part of two intersubunit bridges in the 70S ribosome. The sequence is that of Large ribosomal subunit protein uL14 from Bacillus subtilis (strain 168).